The sequence spans 840 residues: Leucine--tRNA ligase (840 aa).

The 'HIGH' region signature appears at 44 to 55 (PYPSANGLHVGH). The 'KMSKS' region signature appears at 617–621 (KMSKS). Lysine 620 lines the ATP pocket.

The protein belongs to the class-I aminoacyl-tRNA synthetase family.

It is found in the cytoplasm. It carries out the reaction tRNA(Leu) + L-leucine + ATP = L-leucyl-tRNA(Leu) + AMP + diphosphate. This is Leucine--tRNA ligase from Borreliella burgdorferi (strain ZS7) (Borrelia burgdorferi).